We begin with the raw amino-acid sequence, 31 residues long: Photosystem II reaction center protein T (31 aa).

The helical transmembrane segment at A3 to F23 threads the bilayer.

It belongs to the PsbT family. In terms of assembly, PSII is composed of 1 copy each of membrane proteins PsbA, PsbB, PsbC, PsbD, PsbE, PsbF, PsbH, PsbI, PsbJ, PsbK, PsbL, PsbM, PsbT, PsbY, PsbZ, Psb30/Ycf12, at least 3 peripheral proteins of the oxygen-evolving complex and a large number of cofactors. It forms dimeric complexes.

The protein resides in the plastid. It is found in the chloroplast thylakoid membrane. Found at the monomer-monomer interface of the photosystem II (PS II) dimer, plays a role in assembly and dimerization of PSII. PSII is a light-driven water plastoquinone oxidoreductase, using light energy to abstract electrons from H(2)O, generating a proton gradient subsequently used for ATP formation. In Chlamydomonas reinhardtii (Chlamydomonas smithii), this protein is Photosystem II reaction center protein T.